We begin with the raw amino-acid sequence, 624 residues long: Multicopper oxidase elcG (624 aa).

The signal sequence occupies residues 1 to 18 (MACNILNFLTGLLSLSST). 2 Plastocyanin-like domains span residues 48 to 160 (PGRA…IERG) and 216 to 373 (CMDA…TIRI). An N-linked (GlcNAc...) asparagine glycan is attached at Asn65. Cu cation-binding residues include His96, His98, His140, and His142. N-linked (GlcNAc...) asparagine glycosylation is found at Asn271, Asn296, and Asn464. In terms of domain architecture, Plastocyanin-like 3 spans 474–603 (FLFQDPSQIE…GGMGVVILDG (130 aa)). Residues His511, His514, His516, His585, Cys586, His587, and His591 each contribute to the Cu cation site.

Belongs to the multicopper oxidase family.

The protein operates within secondary metabolite biosynthesis. In terms of biological role, multicopper oxidase; part of the gene cluster that mediates the biosynthesis of elsinochrome C, a perelyenequinone phytotoxin structurally similar to cercosporin. The first step of elsinochrome C biosynthesis is performed by the polyketide synthase elcA which catalyzes the formation of nor-toralactone. The starter unit acyltransferase (SAT) domain of elcA initiates polyketide extension by the selective utilization of acetyl-CoA, which is elongated to the heptaketide in the beta-ketoacyl synthase (KS) domain by successive condensations with six malonyl units introduced by the malonyl acyltransferase (MAT) domain. The product template (PT) domain catalyzes C4-C9 and C2-C11 aldol cyclizations and dehydrations to a trihydroxynaphthalene, which is thought to be delivered to the thioesterase (TE) domain for product release. The bifunctional enzyme elcB then methylates nor-toralactone to toralactone before conducting an unusual oxidative aromatic ring opening. The next step in perylenequinone biosynthesis is an O-methylation at the nascent OH-6 of the elcB product performed by the O-methyltransferase elcD. The oxidative coupling of the two monomeric naphthol units in perylenequinone biosynthesis is catalyzed by the FAD-dependent monooxygenase elcE and the multicopper oxidase elcG. ElcG might catalyze the first intermolecular coupling in a regio- and stereo-selective manner via a phenol radical coupling mechanism and the elcE could forge the second C-C bond intramolecularly via a hydride transfer mechanism. The fasciclin domain-containing protein elcF might also play a role duting this step. The last piece of the puzzle in the biosynthesis of elsinochrome C is the additional annulation by enolate coupling to afford the dihydrobenzo(ghi)perylenequinone system, catalyzed by the FAD-dependent monooxygenase elcH. In Phaeosphaeria nodorum (strain SN15 / ATCC MYA-4574 / FGSC 10173) (Glume blotch fungus), this protein is Multicopper oxidase elcG.